An 89-amino-acid polypeptide reads, in one-letter code: Large ribosomal subunit protein eL31 (89 aa).

Belongs to the eukaryotic ribosomal protein eL31 family.

In Picrophilus torridus (strain ATCC 700027 / DSM 9790 / JCM 10055 / NBRC 100828 / KAW 2/3), this protein is Large ribosomal subunit protein eL31.